A 56-amino-acid polypeptide reads, in one-letter code: Chymotrypsin inhibitor (56 aa).

5 disulfides stabilise this stretch: Cys3-Cys36, Cys12-Cys32, Cys16-Cys28, Cys20-Cys56, and Cys38-Cys50. The TIL domain maps to 3–56 (CGPNEVFNTCGSACAPTCAQPKTRICTMQCRIGCQCQEGFLRNGEGACVLPENC).

This sequence belongs to the serine protease inhibitor-like (TIL domain-containing) family.

Its subcellular location is the secreted. Functionally, chymotrypsin and cathepsin G inhibitor. The sequence is that of Chymotrypsin inhibitor from Apis mellifera (Honeybee).